The following is a 127-amino-acid chain: Putative lipoprotein LprJ (127 aa).

Positions 1 to 34 (MTAHTHDGTRTWRTGRQATTLLALLAGVFGGAAS) are cleaved as a signal peptide. Cys35 is lipidated: N-palmitoyl cysteine. Cys35 is lipidated: S-diacylglycerol cysteine. At 35–99 (CAAPIQADMM…MAEINGMSRD (65 aa)) the chain is on the extracellular side. A helical membrane pass occupies residues 100-120 (MASTFTIVAIGTYCPAVIAPL). At 121–127 (MPNRLQA) the chain is on the cytoplasmic side.

May interact with sensor protein KdpD. Modified by Lgt on Cys-35 with an S-linked diacylglycerol, signal peptide is removed by LspA, modified by Lnt with amide-linked fatty acid.

It localises to the cell membrane. Functionally, overexpression induces expression of sensor protein kdpD gene at low K(+) concentrations (0 and 250 uM, tested in M.smegatis). This is Putative lipoprotein LprJ (lprJ) from Mycobacterium tuberculosis (strain ATCC 25618 / H37Rv).